Consider the following 350-residue polypeptide: TATA box-binding protein-like 2 (350 aa).

Residues 82 to 150 (ENRDQTVTGN…QPSPETPNSN (69 aa)) form a disordered region. Over residues 94–116 (ASEESCRTRDRQSQLQLPDEHGS) the composition is skewed to basic and acidic residues. Polar residues-rich tracts occupy residues 118 to 128 (LNLNSNSSPDP) and 139 to 150 (SNQPSPETPNSN).

Belongs to the TBP family. In terms of assembly, interacts with TAF3. As to expression, expressed in myotubes and myofibers (at protein level). Expressed in a wide variety of tissues with highest levels in heart, lung, liver, uterus and placenta and especially the gonads. Expression is higher in the ovary than the testis, and within the ovary expression is localized to the oocytes.

Its subcellular location is the cytoplasm. The protein localises to the nucleus. Its function is as follows. Transcription factor required in complex with TAF3 for the differentiation of myoblasts into myocytes. The complex replaces TFIID at specific promoters at an early stage in the differentiation process. This chain is TATA box-binding protein-like 2, found in Mus musculus (Mouse).